Reading from the N-terminus, the 851-residue chain is Leucine--tRNA ligase (851 aa).

The 'HIGH' region motif lies at 51-61 (PYPSGDLHMGH). Residues 615–619 (KMSKS) carry the 'KMSKS' region motif. Lys618 provides a ligand contact to ATP.

This sequence belongs to the class-I aminoacyl-tRNA synthetase family.

Its subcellular location is the cytoplasm. It catalyses the reaction tRNA(Leu) + L-leucine + ATP = L-leucyl-tRNA(Leu) + AMP + diphosphate. This Clavibacter michiganensis subsp. michiganensis (strain NCPPB 382) protein is Leucine--tRNA ligase.